A 491-amino-acid chain; its full sequence is Maintenance of mitochondrial morphology protein 1 (491 aa).

Residues 1 to 22 are Lumenal-facing; sequence MTFQQNEPSAVPAQSSLSFTQG. The chain crosses the membrane as a helical span at residues 23-43; sequence FLLGQLSVVLLIGAFIKFFIF. At 44-491 the chain is on the cytoplasmic side; sequence GEAPPPPSRG…GTLPGGAAAN (448 aa). Disordered regions lie at residues 50-95, 275-325, and 392-491; these read PSRG…PVPS, PPLH…SPKS, and RTGV…AAAN. Basic residues predominate over residues 54-64; the sequence is LSHRASTHRRS. Polar residues-rich tracts occupy residues 65 to 78 and 85 to 95; these read NSIYTINPNEGTSR and STSNVLRPVPS. The SMP-LTD domain occupies 131–384; that stretch reads QPESLDWFNV…EPRVQVVGLP (254 aa). Pro residues predominate over residues 275-287; sequence PPLHTPSPSPSPP. Polar residues-rich tracts occupy residues 300–315 and 403–412; these read TNGSREPTQEAPNAQE and TGSNAASRSA. Basic and acidic residues predominate over residues 422 to 434; sequence RADDIGREPDGLR.

This sequence belongs to the MMM1 family. As to quaternary structure, homodimer. Component of the ER-mitochondria encounter structure (ERMES) or MDM complex, composed of mmm1, mdm10, mdm12 and mdm34. A mmm1 homodimer associates with one molecule of mdm12 on each side in a pairwise head-to-tail manner, and the SMP-LTD domains of mmm1 and mdm12 generate a continuous hydrophobic tunnel for phospholipid trafficking.

It localises to the endoplasmic reticulum membrane. In terms of biological role, component of the ERMES/MDM complex, which serves as a molecular tether to connect the endoplasmic reticulum (ER) and mitochondria. Components of this complex are involved in the control of mitochondrial shape and protein biogenesis, and function in nonvesicular lipid trafficking between the ER and mitochondria. The mdm12-mmm1 subcomplex functions in the major beta-barrel assembly pathway that is responsible for biogenesis of all outer membrane beta-barrel proteins, and acts in a late step after the SAM complex. The mdm10-mdm12-mmm1 subcomplex further acts in the TOM40-specific pathway after the action of the mdm12-mmm1 complex. Essential for establishing and maintaining the structure of mitochondria and maintenance of mtDNA nucleoids. The chain is Maintenance of mitochondrial morphology protein 1 from Aspergillus flavus (strain ATCC 200026 / FGSC A1120 / IAM 13836 / NRRL 3357 / JCM 12722 / SRRC 167).